The primary structure comprises 165 residues: MSHPALTQLRALRYCKEIPALDPQLLDWLLLEDSMTKRFEQQGKTVSVTMIREGFVEQNEIPEELPLLPKESRYWLREILLCADGEPWLAGRTVVPVSTLSGPELALQKLGKTPLGRYLFTSSTLTRDFIEIGRDAGLWGRRSRLRLSGKPLLLTELFLPASPLY.

4 residues coordinate substrate: M35, R77, L115, and E156.

It belongs to the UbiC family. In terms of assembly, monomer.

It localises to the cytoplasm. It carries out the reaction chorismate = 4-hydroxybenzoate + pyruvate. It functions in the pathway cofactor biosynthesis; ubiquinone biosynthesis. Functionally, removes the pyruvyl group from chorismate, with concomitant aromatization of the ring, to provide 4-hydroxybenzoate (4HB) for the ubiquinone pathway. The chain is Chorismate pyruvate-lyase from Escherichia coli (strain K12 / MC4100 / BW2952).